Reading from the N-terminus, the 118-residue chain is Phosphoribosyl-AMP cyclohydrolase (118 aa).

Position 85 (D85) interacts with Mg(2+). C86 contributes to the Zn(2+) binding site. Mg(2+) contacts are provided by D87 and D89. The Zn(2+) site is built by C102 and C109.

The protein belongs to the PRA-CH family. As to quaternary structure, homodimer. Mg(2+) is required as a cofactor. Requires Zn(2+) as cofactor.

Its subcellular location is the cytoplasm. The enzyme catalyses 1-(5-phospho-beta-D-ribosyl)-5'-AMP + H2O = 1-(5-phospho-beta-D-ribosyl)-5-[(5-phospho-beta-D-ribosylamino)methylideneamino]imidazole-4-carboxamide. It participates in amino-acid biosynthesis; L-histidine biosynthesis; L-histidine from 5-phospho-alpha-D-ribose 1-diphosphate: step 3/9. Its function is as follows. Catalyzes the hydrolysis of the adenine ring of phosphoribosyl-AMP. The polypeptide is Phosphoribosyl-AMP cyclohydrolase (Sulfurisphaera tokodaii (strain DSM 16993 / JCM 10545 / NBRC 100140 / 7) (Sulfolobus tokodaii)).